An 86-amino-acid polypeptide reads, in one-letter code: Large ribosomal subunit protein bL27 (86 aa).

A disordered region spans residues 1–24 (MAHKKAGGSTRNGRDSESKRLGVK).

The protein belongs to the bacterial ribosomal protein bL27 family.

The polypeptide is Large ribosomal subunit protein bL27 (Alcanivorax borkumensis (strain ATCC 700651 / DSM 11573 / NCIMB 13689 / SK2)).